We begin with the raw amino-acid sequence, 839 residues long: Elongation factor 2 (839 aa).

Positions 17–248 constitute a tr-type G domain; it reads ENIRNMSVIA…MGRLWGDSYF (232 aa). Residues 26-33, 156-159, and 211-213 contribute to the GTP site; these read AHVDHGKT, NKVD, and SGL. Position 698 is a diphthamide (histidine 698).

The protein belongs to the TRAFAC class translation factor GTPase superfamily. Classic translation factor GTPase family. EF-G/EF-2 subfamily. In terms of processing, phosphorylation by EF-2 kinase completely inactivates EF-2.

Its subcellular location is the cytoplasm. It catalyses the reaction GTP + H2O = GDP + phosphate + H(+). Catalyzes the GTP-dependent ribosomal translocation step during translation elongation. During this step, the ribosome changes from the pre-translocational (PRE) to the post-translocational (POST) state as the newly formed A-site-bound peptidyl-tRNA and P-site-bound deacylated tRNA move to the P and E sites, respectively. Catalyzes the coordinated movement of the two tRNA molecules, the mRNA and conformational changes in the ribosome. The polypeptide is Elongation factor 2 (efbA) (Dictyostelium discoideum (Social amoeba)).